We begin with the raw amino-acid sequence, 382 residues long: uncharacterized protein (382 aa).

A run of 12 helical transmembrane segments spans residues 8–28, 39–61, 75–95, 102–122, 131–151, 157–177, 204–224, 236–256, 265–284, 289–311, 325–345, and 349–369; these read VLLLLCGLLLLTLAIAVLNTL, PTWQVGMVSSSYFTGNLLGTLLT, YLASLIFAAGCVGLGLMVGFW, FIAGVGCAMIWVVVESALMCS, LLAAYMMVYYVGTVLGQLMIS, LMSVLPWVTGMVLAAILPLLF, LGVNGCIISGIVLGSLYGLMP, GIGFWMAVMVSAGIVGQWPIG, LLVLRVQVFVVILGCLAMLG, APALFILGAAGFTLYPVAMAWAC, ALLLSYTIGSLLGPTFTAMLM, and SDNLLFIMIASVAFIYLLMLL.

Belongs to the major facilitator superfamily. YcaD (TC 2.A.1.26) family.

It is found in the cell inner membrane. This is an uncharacterized protein from Enterobacter sp. (strain 638).